Consider the following 128-residue polypeptide: Fluoride-specific ion channel FluC (128 aa).

A run of 4 helical transmembrane segments spans residues 5 to 25, 35 to 55, 67 to 87, and 96 to 116; these read IVAI…LSIG, LGTL…VVAF, LFVI…SVEV, and FGWA…LTGL. Residues Gly-75 and Thr-78 each coordinate Na(+).

Belongs to the fluoride channel Fluc/FEX (TC 1.A.43) family.

The protein resides in the cell inner membrane. The enzyme catalyses fluoride(in) = fluoride(out). Na(+) is not transported, but it plays an essential structural role and its presence is essential for fluoride channel function. Functionally, fluoride-specific ion channel. Important for reducing fluoride concentration in the cell, thus reducing its toxicity. The protein is Fluoride-specific ion channel FluC of Burkholderia mallei (strain NCTC 10247).